Consider the following 465-residue polypeptide: Mitochondrial F-box protein MFB1 (465 aa).

In terms of domain architecture, F-box spans 14–60; sequence ERSLTNLPLNLLFRILSHLDMNDLQNIGKTCTLLRMLANENIVYRNA. Positions 253-279 are disordered; that stretch reads FTKSRDPDYKEMTPTSTESSDSITRLR. The span at 254–263 shows a compositional bias: basic and acidic residues; that stretch reads TKSRDPDYKE. Over residues 265–275 the composition is skewed to polar residues; that stretch reads TPTSTESSDSI.

The protein resides in the mitochondrion. The polypeptide is Mitochondrial F-box protein MFB1 (MFB1) (Saccharomyces cerevisiae (strain ATCC 204508 / S288c) (Baker's yeast)).